A 626-amino-acid chain; its full sequence is 4-hydroxy-3-methylbut-2-en-1-yl diphosphate synthase (flavodoxin) (626 aa).

Residues C521, C524, C555, and E562 each contribute to the [4Fe-4S] cluster site.

Belongs to the IspG family. The cofactor is [4Fe-4S] cluster.

It carries out the reaction (2E)-4-hydroxy-3-methylbut-2-enyl diphosphate + oxidized [flavodoxin] + H2O + 2 H(+) = 2-C-methyl-D-erythritol 2,4-cyclic diphosphate + reduced [flavodoxin]. Its pathway is isoprenoid biosynthesis; isopentenyl diphosphate biosynthesis via DXP pathway; isopentenyl diphosphate from 1-deoxy-D-xylulose 5-phosphate: step 5/6. Its function is as follows. Converts 2C-methyl-D-erythritol 2,4-cyclodiphosphate (ME-2,4cPP) into 1-hydroxy-2-methyl-2-(E)-butenyl 4-diphosphate. The chain is 4-hydroxy-3-methylbut-2-en-1-yl diphosphate synthase (flavodoxin) from Bacteroides fragilis (strain YCH46).